Reading from the N-terminus, the 142-residue chain is Galactose-binding lectin (142 aa).

In terms of domain architecture, Galectin spans 1-141; sequence TYAEVESFGV…GTDIWDLLLL (141 aa).

In terms of assembly, homotetramer.

With respect to regulation, cytotoxic activity against L.infantum promastigotes is completely inhibited by D-galactose. Inhibition activity against biofilm formation by S.aureus and S.epidermidis is inhibited by alpha-lactose. Hemagglutination activity is inhibited by alpha-lactose (MIC=100 mM), beta-lactose (MIC=100 mM), lactulose (MIC=100 mM), bovine submaxillary mucin (BSM) (MIC=32 ug/ml), fetuin (MIC=16 ug/ml), porcine stomach mucin (PSM) type 2 (MIC=8 ug/ml) and PSM type 3 (MIC=8 ug/ml). Its function is as follows. Galactose-binding lectin. Displays antibacterial and hemagglutinin activity. Inhibits the growth of L.infantum promastigotes by damaging their membrane integrity and inducing cell apoptosis via the production of reactive oxygen species (ROS). Inhibition of L.infantum promastigotes appears to increase with time (MIC=1.2 uM/ml after 24 hours, MIC=0.9 uM/ml after 48 hours and MIC=0.6 uM/ml after 72 hours). Agglutinates Gram-negative and Gram-positive bacteria including E.coli, S.aureus and S.epidermidis, and inhibits biofilm formation by S.aureus and S.epidermidis. Displays hemagglutination activity towards all types of human erythrocytes (O, A and B) and rabbit erythrocytes. The sequence is that of Galactose-binding lectin from Chondrilla caribensis (Chicken liver sponge).